A 131-amino-acid chain; its full sequence is Methylglyoxal synthase (131 aa).

The 131-residue stretch at Met1 to Lys131 folds into the MGS-like domain. Substrate is bound by residues His8, Lys12, Thr34–Thr37, and Ser54–Gly55. Asp60 serves as the catalytic Proton donor/acceptor. Residue His87 participates in substrate binding.

Belongs to the methylglyoxal synthase family.

The catalysed reaction is dihydroxyacetone phosphate = methylglyoxal + phosphate. In terms of biological role, catalyzes the formation of methylglyoxal from dihydroxyacetone phosphate. This chain is Methylglyoxal synthase, found in Bacillus cereus (strain ATCC 10987 / NRS 248).